The sequence spans 309 residues: Sulfate adenylyltransferase subunit 2 (309 aa).

Belongs to the PAPS reductase family. CysD subfamily. In terms of assembly, heterodimer composed of CysD, the smaller subunit, and CysN.

It carries out the reaction sulfate + ATP + H(+) = adenosine 5'-phosphosulfate + diphosphate. Its pathway is sulfur metabolism; hydrogen sulfide biosynthesis; sulfite from sulfate: step 1/3. Functionally, with CysN forms the ATP sulfurylase (ATPS) that catalyzes the adenylation of sulfate producing adenosine 5'-phosphosulfate (APS) and diphosphate, the first enzymatic step in sulfur assimilation pathway. APS synthesis involves the formation of a high-energy phosphoric-sulfuric acid anhydride bond driven by GTP hydrolysis by CysN coupled to ATP hydrolysis by CysD. The sequence is that of Sulfate adenylyltransferase subunit 2 from Methylorubrum populi (strain ATCC BAA-705 / NCIMB 13946 / BJ001) (Methylobacterium populi).